The sequence spans 554 residues: Urocanate hydratase (554 aa).

Residues 50-51 (GG), glutamine 128, 174-176 (GMG), glutamate 194, arginine 199, 240-241 (NA), 261-265 (QTSAH), 271-272 (YI), and tyrosine 320 contribute to the NAD(+) site. Residue cysteine 408 is part of the active site. Glycine 490 is a binding site for NAD(+).

The protein belongs to the urocanase family. It depends on NAD(+) as a cofactor.

The protein localises to the cytoplasm. It carries out the reaction 4-imidazolone-5-propanoate = trans-urocanate + H2O. Its pathway is amino-acid degradation; L-histidine degradation into L-glutamate; N-formimidoyl-L-glutamate from L-histidine: step 2/3. Functionally, catalyzes the conversion of urocanate to 4-imidazolone-5-propionate. The chain is Urocanate hydratase from Rubrobacter xylanophilus (strain DSM 9941 / JCM 11954 / NBRC 16129 / PRD-1).